A 732-amino-acid polypeptide reads, in one-letter code: E3 ubiquitin-protein ligase DCST1 (732 aa).

Residues 1-46 are Cytoplasmic-facing; sequence MAFLSSTLHSLGIFEKISRIKEVLKNRLLDLTKRRDQAREQQRKRP. The helical transmembrane segment at 47–67 threads the bilayer; sequence HTIIQGLLLWSLPVSWIRFLW. Over 68 to 76 the chain is Extracellular; sequence RQPGEFPVT. The chain crosses the membrane as a helical span at residues 77–97; the sequence is AFLLGAGTGGLLAIGLFQLLV. Topologically, residues 98 to 107 are cytoplasmic; sequence NPMNIYEEQK. Residues 108 to 128 traverse the membrane as a helical segment; sequence VVALYCLASLGAIGWGTSPHI. Residues 129-394 are Extracellular-facing; it reads RCASLLLVPK…VRDYVRQQET (266 aa). Asparagine 184, asparagine 217, asparagine 346, and asparagine 374 each carry an N-linked (GlcNAc...) asparagine glycan. A helical membrane pass occupies residues 395–415; the sequence is YLQWAMGLLHVLLSCTFLLVF. Topologically, residues 416–489 are cytoplasmic; it reads HSAFSYMDHY…RYVIRELLET (74 aa). A helical membrane pass occupies residues 490 to 510; sequence LPIVLLLLVLCAIDWALYSVF. Topologically, residues 511 to 576 are extracellular; it reads DTIRQHSFVQ…PQPISLNARD (66 aa). Asparagine 551 carries an N-linked (GlcNAc...) asparagine glycan. A helical membrane pass occupies residues 577–597; the sequence is YFKASLPTLLLVCLCLAQAFG. Residues 598–732 are Cytoplasmic-facing; it reads YRLRRVIAAF…DSNDDAVYGD (135 aa). An RING-type; degenerate zinc finger spans residues 672 to 711; it reads CVVCQAMETPDSYVCPTPDCKALYCRSCWDDMQRLCPVCT.

Interacts with STAT2; the interaction results in STAT2 'Lys-48'-linked ubiquitination leading to its proteasomal degradation. Interacts with DCST2. Expressed in testis.

It localises to the cell membrane. It is found in the cytoplasmic vesicle. The protein resides in the secretory vesicle. The protein localises to the acrosome membrane. It carries out the reaction S-ubiquitinyl-[E2 ubiquitin-conjugating enzyme]-L-cysteine + [acceptor protein]-L-lysine = [E2 ubiquitin-conjugating enzyme]-L-cysteine + N(6)-ubiquitinyl-[acceptor protein]-L-lysine.. It participates in protein modification; protein ubiquitination. Functionally, E3 ubiquitin-protein ligase which mediates 'Lys-48'-linked ubiquitination of STAT2 and induces its proteasomal degradation thereby negatively regulating type-I-interferon signaling. In terms of biological role, essential sperm cell-surface protein required for sperm-egg fusion and fertilization. The polypeptide is E3 ubiquitin-protein ligase DCST1 (Dcst1) (Mus musculus (Mouse)).